Reading from the N-terminus, the 181-residue chain is MAASNALLLISGALLISLAVLCQGDPVVDSDGDAVQLNLGGRYPLYTIESAAIGFHGGLSTLHKDVCKSYVYEAPETDRGLPVSFSASATSEPVMQLGSRYKFSFLMPVPRICDTAWSVGKSTEETGVYKLAACSCEFCKIACPEVGSFNVNGKTLLGIGGEHFTVRFHKSDALAMKTAPQ.

The first 24 residues, 1-24 (MAASNALLLISGALLISLAVLCQG), serve as a signal peptide directing secretion. Disulfide bonds link Cys67-Cys113, Cys134-Cys143, and Cys136-Cys139.

Belongs to the protease inhibitor I3 (leguminous Kunitz-type inhibitor) family.

The protein resides in the secreted. Its function is as follows. Possesses two reactive sites. Inhibits two molecules of trypsin simultaneously. Inhibits efficiently kallikrein, but chymotrypsin weakly. In Sagittaria sagittifolia (Arrowhead), this protein is Proteinase inhibitor B.